The sequence spans 345 residues: L-threonine 3-dehydrogenase (345 aa).

Zn(2+) is bound at residue Cys-42. Catalysis depends on charge relay system residues Thr-44 and His-47. Zn(2+) is bound by residues His-67, Glu-68, Cys-97, Cys-100, Cys-103, and Cys-111. Residues Ile-179, Asp-199, Arg-204, 266-268 (LGI), and 290-291 (IY) each bind NAD(+).

Belongs to the zinc-containing alcohol dehydrogenase family. Homotetramer. Requires Zn(2+) as cofactor.

Its subcellular location is the cytoplasm. The enzyme catalyses L-threonine + NAD(+) = (2S)-2-amino-3-oxobutanoate + NADH + H(+). It participates in amino-acid degradation; L-threonine degradation via oxydo-reductase pathway; glycine from L-threonine: step 1/2. Catalyzes the NAD(+)-dependent oxidation of L-threonine to 2-amino-3-ketobutyrate. The protein is L-threonine 3-dehydrogenase of Rhizobium johnstonii (strain DSM 114642 / LMG 32736 / 3841) (Rhizobium leguminosarum bv. viciae).